A 23-amino-acid polypeptide reads, in one-letter code: Basic phospholipase A2 CB1 (23 aa).

Heterodimer of an acidic subunit and a basic chain. The acidic subunit is non-toxic, without enzymatic activity and comprises 3 peptides that are cross-linked by 7 disulfide bridges. The basic subunit is toxic, has phospholipase A2 activity and is composed of a single chain. Ca(2+) is required as a cofactor. Contains 7 disulfide bonds. As to expression, expressed by the venom gland.

Its subcellular location is the secreted. The catalysed reaction is a 1,2-diacyl-sn-glycero-3-phosphocholine + H2O = a 1-acyl-sn-glycero-3-phosphocholine + a fatty acid + H(+). In terms of biological role, snake venom phospholipase A2 (PLA2) that shows presynaptic neurotoxicity. PLA2 catalyzes the calcium-dependent hydrolysis of the 2-acyl groups in 3-sn-phosphoglycerides. This is Basic phospholipase A2 CB1 from Crotalus basiliscus (Mexican west-coast rattlesnake).